Reading from the N-terminus, the 396-residue chain is Elongation factor Tu (396 aa).

The 197-residue stretch at 10–206 folds into the tr-type G domain; it reads KPHVNVGTIG…ALDTYIPTPE (197 aa). Residues 19–26 form a G1 region; that stretch reads GHVDHGKT. GTP is bound at residue 19-26; that stretch reads GHVDHGKT. T26 serves as a coordination point for Mg(2+). Positions 60–64 are G2; that stretch reads GITIN. Positions 81–84 are G3; that stretch reads DCPG. GTP contacts are provided by residues 81 to 85 and 136 to 139; these read DCPGH and NKCD. Positions 136-139 are G4; it reads NKCD. The segment at 174–176 is G5; the sequence is SAK.

Belongs to the TRAFAC class translation factor GTPase superfamily. Classic translation factor GTPase family. EF-Tu/EF-1A subfamily. In terms of assembly, monomer.

The protein localises to the cytoplasm. It carries out the reaction GTP + H2O = GDP + phosphate + H(+). Its function is as follows. GTP hydrolase that promotes the GTP-dependent binding of aminoacyl-tRNA to the A-site of ribosomes during protein biosynthesis. The chain is Elongation factor Tu from Paraburkholderia xenovorans (strain LB400).